A 234-amino-acid polypeptide reads, in one-letter code: Ribonuclease 3 (234 aa).

Residues 6 to 134 (RKSLEERVGH…IVGALYLDGG (129 aa)) form the RNase III domain. Glutamate 47 serves as a coordination point for Mg(2+). Aspartate 51 is an active-site residue. Serine 120 and glutamate 123 together coordinate Mg(2+). Residue glutamate 123 is part of the active site. The DRBM domain maps to 162-231 (DYKTRLQELV…AKNALEMKYK (70 aa)).

Belongs to the ribonuclease III family. In terms of assembly, homodimer. Mg(2+) serves as cofactor.

The protein resides in the cytoplasm. The catalysed reaction is Endonucleolytic cleavage to 5'-phosphomonoester.. Its function is as follows. Digests double-stranded RNA. Involved in the processing of primary rRNA transcript to yield the immediate precursors to the large and small rRNAs (23S and 16S). Processes some mRNAs, and tRNAs when they are encoded in the rRNA operon. Processes pre-crRNA and tracrRNA of type II CRISPR loci if present in the organism. In Bdellovibrio bacteriovorus (strain ATCC 15356 / DSM 50701 / NCIMB 9529 / HD100), this protein is Ribonuclease 3.